We begin with the raw amino-acid sequence, 333 residues long: Probable tRNA pseudouridine synthase B (333 aa).

The active-site Nucleophile is the aspartate 66. The 76-residue stretch at 233 to 308 (LKKIIVKDSA…EVVEITRVIM (76 aa)) folds into the PUA domain.

The protein belongs to the pseudouridine synthase TruB family. Type 2 subfamily.

The catalysed reaction is uridine(55) in tRNA = pseudouridine(55) in tRNA. Functionally, could be responsible for synthesis of pseudouridine from uracil-55 in the psi GC loop of transfer RNAs. This chain is Probable tRNA pseudouridine synthase B, found in Methanococcus maripaludis (strain C6 / ATCC BAA-1332).